Consider the following 526-residue polypeptide: Na(+)/H(+) antiporter NhaB (526 aa).

The next 11 membrane-spanning stretches (helical) occupy residues 25-45 (IIAF…IAGW), 52-72 (IFTL…LLLI), 89-109 (IVVN…IYFM), 139-159 (AFLS…AVGM), 204-224 (LMMH…VGEP), 240-260 (FFVR…ATTF), 305-325 (GFIG…VGLI), 355-375 (FTAL…QGLF), 391-411 (LVMF…VFVG), 448-468 (VATP…IAPL), and 479-499 (MALP…YFGL).

This sequence belongs to the NhaB Na(+)/H(+) (TC 2.A.34) antiporter family.

Its subcellular location is the cell inner membrane. The catalysed reaction is 2 Na(+)(in) + 3 H(+)(out) = 2 Na(+)(out) + 3 H(+)(in). Functionally, na(+)/H(+) antiporter that extrudes sodium in exchange for external protons. The chain is Na(+)/H(+) antiporter NhaB from Pseudoalteromonas atlantica (strain T6c / ATCC BAA-1087).